Here is a 315-residue protein sequence, read N- to C-terminus: Calumenin (315 aa).

Residues Met-1–Ser-19 form the signal peptide. Position 44 is a phosphoserine (Ser-44). Phosphotyrosine is present on Tyr-47. Position 65 is a phosphothreonine (Thr-65). 6 consecutive EF-hand domains span residues Glu-68–Arg-103, Trp-104–Asp-139, Gln-151–Asp-186, Met-188–Asn-223, Trp-229–Asp-264, and His-265–Ser-300. A Phosphoserine modification is found at Ser-69. Residues Asp-81, Asp-83, Asp-85, Glu-92, Asp-117, Asn-119, Asp-121, and Glu-128 each coordinate Ca(2+). Asn-131 carries an N-linked (GlcNAc...) asparagine glycan. Position 164 (Asp-164) interacts with Ca(2+). An N6-acetyllysine modification is found at Lys-165. Residues Asp-166, Asp-168, Glu-175, Asp-201, Asn-203, Asp-205, Glu-212, Asp-242, Asn-244, Asp-246, Lys-248, and Glu-253 each contribute to the Ca(2+) site. Thr-254 is subject to Phosphothreonine. Ser-261 and Ser-277 each carry phosphoserine. Ca(2+) contacts are provided by Asp-278, Asn-280, Asp-282, Lys-284, and Glu-289. The Prevents secretion from ER motif lies at His-312 to Phe-315.

This sequence belongs to the CREC family. In terms of assembly, interacts with GGCX.

The protein resides in the endoplasmic reticulum membrane. The protein localises to the golgi apparatus. It is found in the secreted. It localises to the melanosome. Its subcellular location is the sarcoplasmic reticulum lumen. In terms of biological role, involved in regulation of vitamin K-dependent carboxylation of multiple N-terminal glutamate residues. Seems to inhibit gamma-carboxylase GGCX. Binds 7 calcium ions with a low affinity. The polypeptide is Calumenin (CALU) (Pongo abelii (Sumatran orangutan)).